A 210-amino-acid polypeptide reads, in one-letter code: MANAKELKQVLTGPIVSNNPIALQVLGVCSALAVTSKMETALVMTIALTVVCAFSNLFISILRNHIPSSVRIIVQMTIIASLVIVVDQVLQAYAYDVAKQLSVFVGLIITNCIVMGRAEAYAMKTPPMMSFMDGIGNGIGYGAILLSVGFIRELFGNGSLFGVEILSKVSDGGWYQPNGLLLLPPSAFFLIGMLIWIIRTYKPEQVEAKG.

6 helical membrane passes run 14 to 34, 42 to 62, 72 to 92, 103 to 123, 131 to 151, and 178 to 198; these read PIVS…ALAV, LVMT…ISIL, IIVQ…VLQA, VFVG…AYAM, FMDG…VGFI, and NGLL…IWII.

This sequence belongs to the NqrDE/RnfAE family. In terms of assembly, composed of six subunits; NqrA, NqrB, NqrC, NqrD, NqrE and NqrF.

Its subcellular location is the cell inner membrane. The catalysed reaction is a ubiquinone + n Na(+)(in) + NADH + H(+) = a ubiquinol + n Na(+)(out) + NAD(+). Functionally, NQR complex catalyzes the reduction of ubiquinone-1 to ubiquinol by two successive reactions, coupled with the transport of Na(+) ions from the cytoplasm to the periplasm. NqrA to NqrE are probably involved in the second step, the conversion of ubisemiquinone to ubiquinol. The chain is Na(+)-translocating NADH-quinone reductase subunit D from Shewanella halifaxensis (strain HAW-EB4).